The chain runs to 282 residues: HTH-type transcriptional activator RhaR (282 aa).

The HTH araC/xylS-type domain maps to 179–277; it reads DKLITRLAAS…GMTPSQWRHL (99 aa). 2 consecutive DNA-binding regions (H-T-H motif) follow at residues 196–217 and 244–267; these read DKFCDEASCSERVLRQQFRQQT and ISDISTECGFEDSNYFSVVFTRET.

In terms of assembly, binds DNA as a dimer.

The protein resides in the cytoplasm. Functionally, activates expression of the rhaSR operon in response to L-rhamnose. In Escherichia coli O1:K1 / APEC, this protein is HTH-type transcriptional activator RhaR.